A 320-amino-acid polypeptide reads, in one-letter code: Malate dehydrogenase (320 aa).

NAD(+) is bound by residues Gly-10–Gly-15 and Asp-34. Arg-83 and Arg-89 together coordinate substrate. NAD(+) is bound by residues Asn-96 and Ile-119 to Asn-121. Positions 121 and 152 each coordinate substrate. The Proton acceptor role is filled by His-176.

This sequence belongs to the LDH/MDH superfamily. MDH type 3 family.

The enzyme catalyses (S)-malate + NAD(+) = oxaloacetate + NADH + H(+). In terms of biological role, catalyzes the reversible oxidation of malate to oxaloacetate. The chain is Malate dehydrogenase from Allorhizobium ampelinum (strain ATCC BAA-846 / DSM 112012 / S4) (Agrobacterium vitis (strain S4)).